A 173-amino-acid chain; its full sequence is Signal peptidase complex catalytic subunit SEC11 (173 aa).

Residues 1–15 are Cytoplasmic-facing; it reads MLGVSGMQPRQLAAQ. A helical; Signal-anchor for type II membrane protein transmembrane segment spans residues 16–36; the sequence is ILNFALVLSTAFMMWKGLSVV. Residues 37–173 are Lumenal-facing; the sequence is SDSSSPIVVV…MGVMVVLQRE (137 aa). Active-site charge relay system residues include serine 50, histidine 89, and aspartate 115. Residues 159–170 are C-terminal short (CTS) helix; sequence VMLGLMGVMVVL.

This sequence belongs to the peptidase S26B family. In terms of assembly, component of the signal peptidase complex (SPC) composed of a catalytic subunit SEC11 and three accessory subunits SPC1, SPC2 and SPC3. The complex induces a local thinning of the ER membrane which is used to measure the length of the signal peptide (SP) h-region of protein substrates. This ensures the selectivity of the complex towards h-regions shorter than 18-20 amino acids. SPC associates with the translocon complex.

Its subcellular location is the endoplasmic reticulum membrane. It carries out the reaction Cleavage of hydrophobic, N-terminal signal or leader sequences from secreted and periplasmic proteins.. Catalytic component of the signal peptidase complex (SPC) which catalyzes the cleavage of N-terminal signal sequences from nascent proteins as they are translocated into the lumen of the endoplasmic reticulum. Specifically cleaves N-terminal signal peptides that contain a hydrophobic alpha-helix (h-region) shorter than 18-20 amino acids. The protein is Signal peptidase complex catalytic subunit SEC11 (SEC11) of Leptosphaeria maculans (strain JN3 / isolate v23.1.3 / race Av1-4-5-6-7-8) (Blackleg fungus).